We begin with the raw amino-acid sequence, 372 residues long: sn-glycerol-3-phosphate import ATP-binding protein UgpC (372 aa).

The ABC transporter domain occupies 2–233; the sequence is LDIKQLVKTY…PASTFVASFI (232 aa). 35 to 42 is a binding site for ATP; the sequence is GPSGCGKS.

Belongs to the ABC transporter superfamily. sn-glycerol-3-phosphate importer (TC 3.A.1.1.3) family. The complex is composed of two ATP-binding proteins (UgpC), two transmembrane proteins (UgpA and UgpE) and a solute-binding protein (UgpB).

It localises to the cell inner membrane. It catalyses the reaction sn-glycerol 3-phosphate(out) + ATP + H2O = sn-glycerol 3-phosphate(in) + ADP + phosphate + H(+). Part of the ABC transporter complex UgpBAEC involved in sn-glycerol-3-phosphate (G3P) import. Responsible for energy coupling to the transport system. This is sn-glycerol-3-phosphate import ATP-binding protein UgpC from Vibrio cholerae serotype O1 (strain ATCC 39315 / El Tor Inaba N16961).